The sequence spans 262 residues: Small ribosomal subunit protein eS1 (262 aa).

It belongs to the eukaryotic ribosomal protein eS1 family. As to quaternary structure, component of the small ribosomal subunit. Mature ribosomes consist of a small (40S) and a large (60S) subunit. The 40S subunit contains about 33 different proteins and 1 molecule of RNA (18S). The 60S subunit contains about 49 different proteins and 3 molecules of RNA (25S, 5.8S and 5S).

It is found in the cytoplasm. This chain is Small ribosomal subunit protein eS1, found in Brassica campestris (Field mustard).